We begin with the raw amino-acid sequence, 440 residues long: L-seryl-tRNA(Sec) selenium transferase (440 aa).

Lysine 282 carries the N6-(pyridoxal phosphate)lysine modification.

Belongs to the SelA family. The cofactor is pyridoxal 5'-phosphate.

Its subcellular location is the cytoplasm. It carries out the reaction L-seryl-tRNA(Sec) + selenophosphate + H(+) = L-selenocysteinyl-tRNA(Sec) + phosphate. The protein operates within aminoacyl-tRNA biosynthesis; selenocysteinyl-tRNA(Sec) biosynthesis; selenocysteinyl-tRNA(Sec) from L-seryl-tRNA(Sec) (bacterial route): step 1/1. Its function is as follows. Converts seryl-tRNA(Sec) to selenocysteinyl-tRNA(Sec) required for selenoprotein biosynthesis. This is L-seryl-tRNA(Sec) selenium transferase from Campylobacter jejuni subsp. jejuni serotype O:6 (strain 81116 / NCTC 11828).